The chain runs to 319 residues: ADP-ribosyl cyclase/cyclic ADP-ribose hydrolase 2 (319 aa).

The signal sequence occupies residues 1–33 (MAVQACALSLRLGLWMSLLLPVLPGAGARAAGA). Disulfide bonds link Cys52/Cys68, Cys84/Cys164, and Cys145/Cys158. Asn67 and Asn96 each carry an N-linked (GlcNAc...) asparagine glycan. NAD(+) is bound at residue Trp110. A nicotinamide-binding site is contributed by Trp110. N-linked (GlcNAc...) asparagine glycosylation occurs at Asn149. An NAD(+)-binding site is contributed by Trp173. N-linked (GlcNAc...) asparagine glycosylation occurs at Asn193. Residue Glu211 participates in NAD(+) binding. Cystine bridges form between Cys239/Cys260 and Cys272/Cys281. Residue Ser294 is the site of GPI-anchor amidated serine attachment. Positions 295–319 (PALHAIGDISLIISLLVALASSSQA) are excised as a propeptide.

It belongs to the ADP-ribosyl cyclase family. In terms of assembly, homodimer. As to expression, pancreatic islets, kidney, spleen, heart, thymus, intestine and salivary gland.

It is found in the cell membrane. The catalysed reaction is NAD(+) + H2O = ADP-D-ribose + nicotinamide + H(+). It carries out the reaction NAD(+) = cyclic ADP-beta-D-ribose + nicotinamide + H(+). It catalyses the reaction cyclic ADP-beta-D-ribose + H2O = ADP-D-ribose. Functionally, catalyzes both the synthesis of cyclic ADP-beta-D-ribose (cADPR) from NAD(+), and its hydrolysis to ADP-D-ribose (ADPR). Cyclic ADPR is known to serve as an endogenous second messenger that elicits calcium release from intracellular stores, and thus regulates the mobilization of intracellular calcium. May be involved in pre-B-cell growth. The protein is ADP-ribosyl cyclase/cyclic ADP-ribose hydrolase 2 (Bst1) of Rattus norvegicus (Rat).